An 86-amino-acid chain; its full sequence is Small ribosomal subunit protein uS15 (86 aa).

Positions 1–22 (MSIDTQKVIEDNKRSSADTGSP) are disordered. Over residues 7-16 (KVIEDNKRSS) the composition is skewed to basic and acidic residues.

It belongs to the universal ribosomal protein uS15 family. Part of the 30S ribosomal subunit. Forms a bridge to the 50S subunit in the 70S ribosome, contacting the 23S rRNA.

Functionally, one of the primary rRNA binding proteins, it binds directly to 16S rRNA where it helps nucleate assembly of the platform of the 30S subunit by binding and bridging several RNA helices of the 16S rRNA. In terms of biological role, forms an intersubunit bridge (bridge B4) with the 23S rRNA of the 50S subunit in the ribosome. In Stenotrophomonas maltophilia (strain R551-3), this protein is Small ribosomal subunit protein uS15.